The chain runs to 181 residues: MNPRRKSRLKVVVLIMFSVAVAAGLTLYALSQNIDLFYTPSEIVKGKNNDPQLKPAVGQRIRVGGMVVEGSVKRDDKTLKVEFNLNDIGPAITVEYEGILPDLFREGQGIVAQGVLVEPTRLKASEVLAKHDENYMPPELGDKMKQQHNAVGVAEGDLKGESIRDKAELDRTFNTLQGESK.

Residues 1 to 8 (MNPRRKSR) lie on the Cytoplasmic side of the membrane. Residues 9–29 (LKVVVLIMFSVAVAAGLTLYA) traverse the membrane as a helical; Signal-anchor for type II membrane protein segment. The Periplasmic segment spans residues 30–181 (LSQNIDLFYT…TFNTLQGESK (152 aa)). Heme is bound by residues His131 and Tyr135.

Belongs to the CcmE/CycJ family.

The protein localises to the cell inner membrane. In terms of biological role, heme chaperone required for the biogenesis of c-type cytochromes. Transiently binds heme delivered by CcmC and transfers the heme to apo-cytochromes in a process facilitated by CcmF and CcmH. This is Cytochrome c-type biogenesis protein CcmE from Haemophilus ducreyi (strain 35000HP / ATCC 700724).